The primary structure comprises 1170 residues: Cellulose synthase-like protein D2 (1170 aa).

Disordered stretches follow at residues 1–48 (MASS…RRTH), 54–73 (SYSRDDLDSELGNSGDMSPE), and 269–295 (NEVDNGGGGGGGGGLGGGDGQPAEFTS). Over residues 10–24 (RHSNSSRLSRMSYSG) the composition is skewed to low complexity. Gly residues predominate over residues 273-288 (NGGGGGGGGGLGGGDG). Helical transmembrane passes span 311 to 331 (VLSPYRLLILIRMAVLGLFLA) and 341 to 361 (AMWLWGMSVVCELWFGLSWLL). The active site involves aspartate 441. The stretch at 527 to 551 (HAREEIKAMKRQREAALDDVVEAVK) forms a coiled coil. The active site involves aspartate 873. 6 consecutive transmembrane segments (helical) span residues 955-975 (IFLIVYCFLPALSLFSGQFIV), 981-1001 (TFLTYLLVITLTMCMLAVLEI), 1027-1047 (LAAVLQGLLKVIAGIEISFTL), 1070-1090 (SLMIPPIVIMMVNLIAIAVGF), 1104-1124 (LLGGVFFSFWVLAHLYPFAKG), and 1134-1154 (TIVFVWSGLLAITISLLWVAI).

The protein belongs to the glycosyltransferase 2 family. Plant cellulose synthase-like D subfamily.

It localises to the golgi apparatus membrane. Thought to be a Golgi-localized beta-glycan synthase that polymerize the backbones of noncellulosic polysaccharides (hemicelluloses) of plant cell wall. This is Cellulose synthase-like protein D2 (CSLD2) from Oryza sativa subsp. japonica (Rice).